We begin with the raw amino-acid sequence, 279 residues long: Release factor glutamine methyltransferase (279 aa).

S-adenosyl-L-methionine is bound by residues aspartate 139 and asparagine 182. 182 to 185 (NPPY) lines the substrate pocket.

Belongs to the protein N5-glutamine methyltransferase family. PrmC subfamily.

It carries out the reaction L-glutaminyl-[peptide chain release factor] + S-adenosyl-L-methionine = N(5)-methyl-L-glutaminyl-[peptide chain release factor] + S-adenosyl-L-homocysteine + H(+). Functionally, methylates the class 1 translation termination release factors RF1/PrfA and RF2/PrfB on the glutamine residue of the universally conserved GGQ motif. This chain is Release factor glutamine methyltransferase, found in Thermodesulfovibrio yellowstonii (strain ATCC 51303 / DSM 11347 / YP87).